The chain runs to 627 residues: Mitochondrial distribution and morphology protein 34 (627 aa).

Positions Met-1–Leu-195 constitute an SMP-LTD domain. Disordered stretches follow at residues Ser-209–Gln-230, Ala-332–Pro-470, Leu-486–Ser-557, and Arg-586–His-627. 2 stretches are compositionally biased toward low complexity: residues Pro-215–Leu-225 and Ala-332–Arg-341. Residues Arg-360–Arg-372 are compositionally biased toward basic residues. Basic and acidic residues predominate over residues Val-373–Asp-384. Positions Ser-390–Thr-412 are enriched in low complexity. The span at Thr-436–Ser-451 shows a compositional bias: basic and acidic residues. The span at Pro-528 to Ser-557 shows a compositional bias: low complexity.

It belongs to the MDM34 family. In terms of assembly, component of the ER-mitochondria encounter structure (ERMES) or MDM complex, composed of MMM1, MDM10, MDM12 and MDM34.

The protein resides in the mitochondrion outer membrane. In terms of biological role, component of the ERMES/MDM complex, which serves as a molecular tether to connect the endoplasmic reticulum (ER) and mitochondria. Components of this complex are involved in the control of mitochondrial shape and protein biogenesis, and function in nonvesicular lipid trafficking between the ER and mitochondria. MDM34 is required for the interaction of the ER-resident membrane protein MMM1 and the outer mitochondrial membrane-resident beta-barrel protein MDM10. The protein is Mitochondrial distribution and morphology protein 34 of Blastomyces gilchristii (strain SLH14081) (Blastomyces dermatitidis).